A 123-amino-acid polypeptide reads, in one-letter code: PTS-dependent dihydroxyacetone kinase, phosphotransferase subunit DhaM (123 aa).

Positions threonine 2–lysine 123 constitute a PTS EIIA type-4 domain. Residue histidine 10 is the Tele-phosphohistidine intermediate; for EIIA activity of the active site.

Homodimer. The dihydroxyacetone kinase complex is composed of a homodimer of DhaM, a homodimer of DhaK and the subunit DhaL.

The enzyme catalyses dihydroxyacetone + phosphoenolpyruvate = dihydroxyacetone phosphate + pyruvate. Its pathway is polyol metabolism; glycerol degradation. In terms of biological role, component of the dihydroxyacetone kinase complex, which is responsible for the phosphoenolpyruvate (PEP)-dependent phosphorylation of dihydroxyacetone. DhaM serves as the phosphoryl donor. Is phosphorylated by phosphoenolpyruvate in an EI- and HPr-dependent reaction, and a phosphorelay system on histidine residues finally leads to phosphoryl transfer to DhaL and dihydroxyacetone. The sequence is that of PTS-dependent dihydroxyacetone kinase, phosphotransferase subunit DhaM from Lactococcus lactis subsp. lactis (strain IL1403) (Streptococcus lactis).